The following is a 678-amino-acid chain: DNA mismatch repair protein MutL (678 aa).

It belongs to the DNA mismatch repair MutL/HexB family.

Its function is as follows. This protein is involved in the repair of mismatches in DNA. It is required for dam-dependent methyl-directed DNA mismatch repair. May act as a 'molecular matchmaker', a protein that promotes the formation of a stable complex between two or more DNA-binding proteins in an ATP-dependent manner without itself being part of a final effector complex. This is DNA mismatch repair protein MutL from Lactiplantibacillus plantarum (strain ATCC BAA-793 / NCIMB 8826 / WCFS1) (Lactobacillus plantarum).